We begin with the raw amino-acid sequence, 705 residues long: Probable glutamate carboxypeptidase AMP1 (705 aa).

The Cytoplasmic segment spans residues 1-24 (MSQPLTTRPTVTGISIIPFRQPPP). A helical; Signal-anchor for type II membrane protein membrane pass occupies residues 25–42 (LCSFLFVIVLFVATFYTL). Residues 43–705 (HHPDAVTPPL…ASKALKGGFT (663 aa)) are Extracellular-facing. N-linked (GlcNAc...) asparagine glycosylation is found at Asn74, Asn137, and Asn322. The segment at 255–548 (GVVGGEKLSL…GIWGLLGILL (294 aa)) is catalytic. Residues His356 and Asp366 each contribute to the Zn(2+) site. Residue Glu403 is the Nucleophile of the active site. Zn(2+) contacts are provided by Glu404, Asp432, and His514. Asn676 carries an N-linked (GlcNAc...) asparagine glycan.

Belongs to the peptidase M28 family. M28B subfamily. The cofactor is Zn(2+). As to expression, expressed in all plant parts. Highest levels in the bolt stem, inflorescence, root and silique. Low level in leaves.

Its subcellular location is the endoplasmic reticulum membrane. The enzyme catalyses Release of an unsubstituted, C-terminal glutamyl residue, typically from Ac-Asp-Glu or folylpoly-gamma-glutamates.. May modulate the level of one or more small signaling molecules that have a role in regulating meristem function. May play a role in balancing and restricting the meristem-promoting activity of auxin signaling. Involved in ethylene and giberellin (GA) signaling pathways or in a parallel pathway controlling cell and hypocotyl elongation and cellular organization. Involved in abscisic acid (ABA) signaling pathway. Plays a negative role in ABA-mediated seed germination and seedling development. Acts in association with LAMP1 to suppress ectopic stem cell niche formation in the shoot apical meristem (SAM) independently of cytokinin signaling pathway. Modulates responses to ABA, oxidative stress and abotic stress. Acts as a negative regulator of the ABA signaling pathway to modulate freezing and drought stress responses. Mediates carbon and amino acid metabolism. May be involved in the acquisition and/or maintenance of seed dormancy. Involved in the regulation of response to heat shock and plant defense. The sequence is that of Probable glutamate carboxypeptidase AMP1 from Arabidopsis thaliana (Mouse-ear cress).